The primary structure comprises 250 residues: Vacuolar iron transporter 1 (250 aa).

Over methionine 1–aspartate 37 the chain is Cytoplasmic. The helical transmembrane segment at isoleucine 38–glycine 58 threads the bilayer. Residues alanine 59 to serine 64 lie on the Vacuolar side of the membrane. Residues isoleucine 65–glycine 85 form a helical membrane-spanning segment. The Cytoplasmic segment spans residues tyrosine 86–alanine 169. Positions serine 91–leucine 166 are cytoplasmic metal binding domain (MBD). 6 residues coordinate Fe cation: glutamate 103, glutamate 106, glutamate 114, glutamate 117, methionine 150, and glutamate 154. Residues phenylalanine 170–isoleucine 190 traverse the membrane as a helical segment. Topologically, residues proline 191–histidine 192 are vacuolar. The helical transmembrane segment at alanine 193–tyrosine 213 threads the bilayer. The Cytoplasmic segment spans residues alanine 214–alanine 227. Residues phenylalanine 228–valine 248 traverse the membrane as a helical segment. Residues glutamine 249 to histidine 250 are Vacuolar-facing.

This sequence belongs to the CCC1 family. In terms of assembly, homodimer. The dimeric interaction is mediated by both the transmembrane domains (TMDs) and the cytoplasmic metal binding domain (MBD). As to expression, highly expressed in developing embryo and seed. Expressed in young seedlings, predominantly in the vasculature.

It is found in the vacuole membrane. The catalysed reaction is Fe(2+)(in) = Fe(2+)(out). Functionally, vacuolar iron transporter involved in the transfer of iron ions from the cytosol to the vacuole for intracellular iron storage. Involved in regulation of cellular iron homeostasis. Vacuolar iron storage is required for seed embryo and seedling development. In Arabidopsis thaliana (Mouse-ear cress), this protein is Vacuolar iron transporter 1.